The following is a 512-amino-acid chain: Tyrosine-protein kinase Lyn (512 aa).

The disordered stretch occupies residues 1 to 62 (MGCIKSKGKD…GQRFQTKDPE (62 aa)). Gly2 carries the N-myristoyl glycine lipid modification. A lipid anchor (S-palmitoyl cysteine) is attached at Cys3. Phosphoserine occurs at positions 11 and 13. The SH3 domain occupies 63–123 (EQGDIVVALY…PSNYVAKLNT (61 aa)). The SH2 domain maps to 129–226 (WFFKDITRKD…GLCRRLEKAC (98 aa)). The residue at position 193 (Tyr193) is a Phosphotyrosine. Ser228 carries the phosphoserine modification. Positions 247–501 (IKLVKRLGAG…YLQSVLDDFY (255 aa)) constitute a Protein kinase domain. ATP contacts are provided by residues 253-261 (LGAGQFGEV) and Lys275. Tyr306 and Tyr316 each carry phosphotyrosine. The active-site Proton acceptor is Asp367. Residue Tyr397 is modified to Phosphotyrosine; by autocatalysis. Phosphotyrosine is present on residues Tyr460 and Tyr473. At Tyr508 the chain carries Phosphotyrosine; by autocatalysis, CSK and MATK.

This sequence belongs to the protein kinase superfamily. Tyr protein kinase family. SRC subfamily. Interacts with TEC. Interacts (via SH2 domain) with FLT3 (tyrosine phosphorylated). Interacts with LIME1 and with CD79A upon activation of the B-cell antigen receptor. Interacts with the B-cell receptor complex. Interacts with phosphorylated THEMIS2. Interacts with EPOR. Interacts with MS4A2/FCER1B. Interaction (via the SH2 and SH3 domains) with MUC1 is stimulated by IL7 and the subsequent phosphorylation increases the binding between MUC1 and CTNNB1/beta-catenin. Interacts with ADAM15. Interacts with NDFIP2 and more weakly with NDFIP1. Interacts with FASLG. Interacts with KIT. Interacts with HCLS1. Interacts with FCGR2B. Interacts with FCGR1A; the interaction may be indirect. Interacts with CD19, CD22, CD79A and CD79B. Interacts (via SH3 domain) with CBLC, PPP1R15A and PDE4A. Interacts with TGFB1I1. Interacts (via SH3 domain) with PIK3R1, the regulatory subunit of phosphatidylinositol 3-kinase; this interaction enhances phosphatidylinositol 3-kinase activity. Interacts with CSF2RB, the common subunit of the IL3, IL5 and CSF2 receptors. Interacts with PAG1; identified in a complex with PAG1 and STAT3. Interacts with ABL1. Interacts with PTPN6/SHP-1. Interacts (via SH3 domain) with SCIMP (via proline-rich region). This interaction facilitates the phosphorylation of SCIMP on 'Tyr-107', which enhances binding of SCIMP to TLR4, and consequently the phosphorylation of TLR4 in response to stimulation by lipopolysaccharide in macrophages. Interacts with LPXN (via LD motif 3) and the interaction is induced upon B-cell antigen receptor (BCR) activation. Interacts (via SH3-domain) with ANKRD54 (via ankyrin repeat region) in an activation-independent status of LYN. Forms a multiprotein complex with ANKRD54 and HCLS1. Interacts (via SH2 and SH3 domains) with UNC119; leading to LYN activation. Interacts with CD36. Interacts with LYN. Interacts with SKAP1 and FYB1; this interaction promotes the phosphorylation of CLNK. Interacts with BCAR1/CAS and NEDD9/HEF1. In terms of assembly, (Microbial infection) Interacts with Epstein-Barr virus LMP2A. As to quaternary structure, (Microbial infection) Interacts with Herpes virus saimiri tyrosine kinase interacting protein (Tip). Ubiquitinated by CBL, leading to its degradation. Ubiquitination is SH3-dependent. In terms of processing, autophosphorylated. Phosphorylated on tyrosine residues in response to KIT signaling. Phosphorylation at Tyr-397 is required for optimal activity. Phosphorylation at Tyr-508 inhibits kinase activity. Phosphorylated at Tyr-508 by CSK. Dephosphorylated by PTPRC/CD45. Becomes rapidly phosphorylated upon activation of the B-cell receptor and the immunoglobulin receptor FCGR1A. Phosphorylated in response to ITGB1 in B-cells. Detected in monocytes (at protein level). Detected in placenta, and in fetal brain, lung, liver and kidney. Widely expressed in a variety of organs, tissues, and cell types such as epidermoid, hematopoietic, and neuronal cells. Expressed in primary neuroblastoma tumors.

Its subcellular location is the cell membrane. It is found in the nucleus. The protein resides in the cytoplasm. It localises to the perinuclear region. The protein localises to the golgi apparatus. Its subcellular location is the membrane. The catalysed reaction is L-tyrosyl-[protein] + ATP = O-phospho-L-tyrosyl-[protein] + ADP + H(+). Its activity is regulated as follows. Subject to autoinhibition, mediated by intramolecular interactions between the SH2 domain and the C-terminal phosphotyrosine. Phosphorylation at Tyr-397 is required for optimal activity. Phosphorylated by CSK at Tyr-508; phosphorylation at Tyr-508 inhibits kinase activity. Kinase activity is modulated by dephosphorylation by PTPRC/CD45. Inhibited by Dasatinib, PP2, and SU6656. Non-receptor tyrosine-protein kinase that transmits signals from cell surface receptors and plays an important role in the regulation of innate and adaptive immune responses, hematopoiesis, responses to growth factors and cytokines, integrin signaling, but also responses to DNA damage and genotoxic agents. Functions primarily as negative regulator, but can also function as activator, depending on the context. Required for the initiation of the B-cell response, but also for its down-regulation and termination. Plays an important role in the regulation of B-cell differentiation, proliferation, survival and apoptosis, and is important for immune self-tolerance. Acts downstream of several immune receptors, including the B-cell receptor, CD79A, CD79B, CD5, CD19, CD22, FCER1, FCGR2, FCGR1A, TLR2 and TLR4. Plays a role in the inflammatory response to bacterial lipopolysaccharide. Mediates the responses to cytokines and growth factors in hematopoietic progenitors, platelets, erythrocytes, and in mature myeloid cells, such as dendritic cells, neutrophils and eosinophils. Acts downstream of EPOR, KIT, MPL, the chemokine receptor CXCR4, as well as the receptors for IL3, IL5 and CSF2. Plays an important role in integrin signaling. Regulates cell proliferation, survival, differentiation, migration, adhesion, degranulation, and cytokine release. Involved in the regulation of endothelial activation, neutrophil adhesion and transendothelial migration. Down-regulates signaling pathways by phosphorylation of immunoreceptor tyrosine-based inhibitory motifs (ITIM), that then serve as binding sites for phosphatases, such as PTPN6/SHP-1, PTPN11/SHP-2 and INPP5D/SHIP-1, that modulate signaling by dephosphorylation of kinases and their substrates. Phosphorylates LIME1 in response to CD22 activation. Phosphorylates BTK, CBL, CD5, CD19, CD72, CD79A, CD79B, CSF2RB, DOK1, HCLS1, LILRB3/PIR-B, MS4A2/FCER1B, SYK and TEC. Promotes phosphorylation of SIRPA, PTPN6/SHP-1, PTPN11/SHP-2 and INPP5D/SHIP-1. Mediates phosphorylation of the BCR-ABL fusion protein. Required for rapid phosphorylation of FER in response to FCER1 activation. Mediates KIT phosphorylation. Acts as an effector of EPOR (erythropoietin receptor) in controlling KIT expression and may play a role in erythroid differentiation during the switch between proliferation and maturation. Depending on the context, activates or inhibits several signaling cascades. Regulates phosphatidylinositol 3-kinase activity and AKT1 activation. Regulates activation of the MAP kinase signaling cascade, including activation of MAP2K1/MEK1, MAPK1/ERK2, MAPK3/ERK1, MAPK8/JNK1 and MAPK9/JNK2. Mediates activation of STAT5A and/or STAT5B. Phosphorylates LPXN on 'Tyr-72'. Kinase activity facilitates TLR4-TLR6 heterodimerization and signal initiation. Phosphorylates SCIMP on 'Tyr-107'; this enhances binding of SCIMP to TLR4, promoting the phosphorylation of TLR4, and a selective cytokine response to lipopolysaccharide in macrophages. Phosphorylates CLNK. Phosphorylates BCAR1/CAS and NEDD9/HEF1. This Homo sapiens (Human) protein is Tyrosine-protein kinase Lyn (LYN).